Reading from the N-terminus, the 659-residue chain is Chaperone protein DnaK (659 aa).

Position 201 is a phosphothreonine; by autocatalysis (Thr-201). Residues 571–592 (RSALKEDAPTEKIKEASDELSR) are compositionally biased toward basic and acidic residues. Residues 571-659 (RSALKEDAPT…DVEIVDKPND (89 aa)) are disordered. Positions 600–613 (AMQSQSASAAANAQ) are enriched in low complexity.

The protein belongs to the heat shock protein 70 family.

Functionally, acts as a chaperone. The protein is Chaperone protein DnaK of Chlamydia abortus (strain DSM 27085 / S26/3) (Chlamydophila abortus).